Reading from the N-terminus, the 89-residue chain is Small ribosomal subunit protein uS14 (89 aa).

It belongs to the universal ribosomal protein uS14 family. Part of the 30S ribosomal subunit. Contacts proteins S3 and S10.

In terms of biological role, binds 16S rRNA, required for the assembly of 30S particles and may also be responsible for determining the conformation of the 16S rRNA at the A site. This is Small ribosomal subunit protein uS14 from Latilactobacillus sakei subsp. sakei (strain 23K) (Lactobacillus sakei subsp. sakei).